The chain runs to 246 residues: 1-(5-phosphoribosyl)-5-[(5-phosphoribosylamino)methylideneamino] imidazole-4-carboxamide isomerase (246 aa).

Aspartate 12 serves as the catalytic Proton acceptor. The active-site Proton donor is aspartate 134.

Belongs to the HisA/HisF family.

The protein resides in the cytoplasm. It catalyses the reaction 1-(5-phospho-beta-D-ribosyl)-5-[(5-phospho-beta-D-ribosylamino)methylideneamino]imidazole-4-carboxamide = 5-[(5-phospho-1-deoxy-D-ribulos-1-ylimino)methylamino]-1-(5-phospho-beta-D-ribosyl)imidazole-4-carboxamide. The protein operates within amino-acid biosynthesis; L-histidine biosynthesis; L-histidine from 5-phospho-alpha-D-ribose 1-diphosphate: step 4/9. This chain is 1-(5-phosphoribosyl)-5-[(5-phosphoribosylamino)methylideneamino] imidazole-4-carboxamide isomerase, found in Haloarcula marismortui (strain ATCC 43049 / DSM 3752 / JCM 8966 / VKM B-1809) (Halobacterium marismortui).